A 333-amino-acid chain; its full sequence is Eukaryotic translation initiation factor 2 subunit 2 (333 aa).

3 disordered regions span residues 1-87 (MSGD…KSKK), 98-117 (IKDLKIESDVQEPAEPEEDL), and 141-165 (EKDEALEDEDSKKDDGISFSNQTGP). N-acetylserine is present on Ser2. A phosphoserine mark is found at Ser2 and Ser13. Basic residues predominate over residues 13–22 (SKKKKKKKKP). At Thr36 the chain carries Phosphothreonine. Positions 40–51 (ETKEVEPEPTED) are enriched in basic and acidic residues. A Phosphoserine modification is found at Ser67. Lys102 is covalently cross-linked (Glycyl lysine isopeptide (Lys-Gly) (interchain with G-Cter in SUMO2)). Position 105 is a phosphoserine (Ser105). Residues 106–117 (DVQEPAEPEEDL) are compositionally biased toward acidic residues. Phosphoserine is present on residues Ser158 and Ser218. An N6-acetyllysine mark is found at Lys265 and Lys293. The segment at 281 to 305 (CHTCRSPDTILQKDTRLYFLQCETC) adopts a C4-type zinc-finger fold.

The protein belongs to the eIF-2-beta/eIF-5 family. Eukaryotic translation initiation factor 2 eIF2 is a heterotrimeric complex composed of an alpha (EIF2S1), a beta (EIF2S2) and a gamma (EIF2S3) chain. eIF2 is member of the 43S pre-initiation complex (43S PIC). eIF2 forms a complex with at least CELF1/CUGBP1, CALR, CALR3, EIF2S1, EIF2S2, HSP90B1 and HSPA5. Interacts with BZW2/5MP1. Interacts with EIF5.

The protein resides in the cytoplasm. The protein localises to the cytosol. In terms of biological role, component of the eIF2 complex that functions in the early steps of protein synthesis by forming a ternary complex with GTP and initiator tRNA. This complex binds to a 40S ribosomal subunit, followed by mRNA binding to form a 43S pre-initiation complex (43S PIC). Junction of the 60S ribosomal subunit to form the 80S initiation complex is preceded by hydrolysis of the GTP bound to eIF2 and release of an eIF2-GDP binary complex. In order for eIF2 to recycle and catalyze another round of initiation, the GDP bound to eIF2 must exchange with GTP by way of a reaction catalyzed by eIF2B. This chain is Eukaryotic translation initiation factor 2 subunit 2 (EIF2S2), found in Bos taurus (Bovine).